Here is a 218-residue protein sequence, read N- to C-terminus: Probable 1-Cys peroxiredoxin (218 aa).

The region spanning 5-166 is the Thioredoxin domain; it reads WALGDLVPDI…VLRVLDSLQL (162 aa). Cysteine 47 functions as the Cysteine sulfenic acid (-SOH) intermediate in the catalytic mechanism.

Belongs to the peroxiredoxin family. Prx6 subfamily.

The protein localises to the nucleus. It localises to the cytoplasm. It catalyses the reaction a hydroperoxide + [thioredoxin]-dithiol = an alcohol + [thioredoxin]-disulfide + H2O. Its function is as follows. Thiol-specific peroxidase that catalyzes the reduction of hydrogen peroxide and organic hydroperoxides to water and alcohols, respectively. Seems to contribute to the inhibition of germination during stress. Associated with the rehydration events involved in the recovery of the desiccation-tolerant moss. The sequence is that of Probable 1-Cys peroxiredoxin from Syntrichia ruralis (Great hairy screw-moss).